Here is a 153-residue protein sequence, read N- to C-terminus: ORM1-like protein 1 (153 aa).

Topologically, residues 1–27 are cytoplasmic; it reads MNVGVAHSEVNPNTRVMNSRGIWLTYA. Transmembrane regions (helical) follow at residues 28–46 and 47–64; these read LGVG…FSVP and VVWT…YVFM. At 65 to 105 the chain is on the cytoplasmic side; the sequence is HAVKGTPFETPDQGKARLLTHWEQLDYGVQFTSSRKFFTIS. The next 2 membrane-spanning stretches (helical) occupy residues 106–123 and 124–140; these read PIIL…DTAH and FVIN…PKLP. Residues 141-153 are Cytoplasmic-facing; it reads QLHGVRIFGINKY.

It belongs to the ORM family. Ceramide-sensitive subunit of the serine palmitoyltransferase (SPT) complex, which is also composed of SPTLC1, SPTLC2/3 and SPTSSA/B.

Its subcellular location is the endoplasmic reticulum membrane. Its function is as follows. Plays an essential role in the homeostatic regulation of sphingolipid de novo biosynthesis by modulating the activity of the serine palmitoyltransferase (SPT) in response to ceramide levels. When complexed to SPT, the binding of ceramides to its N-terminus stabilizes a conformation that block SPT substrate entry, hence preventing SPT catalytic activity. Through this mechanism, maintains ceramide levels at sufficient concentrations for the production of complex sphingolipids, but which prevents the accumulation of ceramides to levels that trigger apoptosis. The polypeptide is ORM1-like protein 1 (ormdl1) (Danio rerio (Zebrafish)).